Here is a 144-residue protein sequence, read N- to C-terminus: MPEPARPAPAPVPVHGTLLAFDYGEKRIGVALGNSITRSARALEVIPNRSVEYRFTQITRLVNAWQPVGFVVGMPVHPEGEDQPMIKLAKRFGNQLHGRYGLPVTWVDERYSSIAAQDAGATDDVLDAEAARIILQQFFDESHA.

This sequence belongs to the YqgF nuclease family.

The protein localises to the cytoplasm. Could be a nuclease involved in processing of the 5'-end of pre-16S rRNA. In Ralstonia nicotianae (strain ATCC BAA-1114 / GMI1000) (Ralstonia solanacearum), this protein is Putative pre-16S rRNA nuclease.